A 587-amino-acid chain; its full sequence is DELLA protein GAIP-B (587 aa).

Residues methionine 1–glycine 23 form a disordered region. Positions aspartate 46 to alanine 50 match the DELLA motif motif. Residues valine 209–lysine 577 enclose the GRAS domain. The tract at residues isoleucine 216–isoleucine 270 is leucine repeat I (LRI). The VHIID stretch occupies residues glutamine 288–glycine 353. A VHIID motif is present at residues valine 319–aspartate 323. The tract at residues aspartate 367–serine 399 is leucine repeat II (LRII). Residues valine 411–asparagine 498 are PFYRE. The LXXLL motif signature appears at leucine 419 to leucine 423. The segment at alanine 501–lysine 577 is SAW.

This sequence belongs to the GRAS family. DELLA subfamily. Post-translationally, phosphorylated. In terms of processing, ubiquitinated. Upon GA application it is ubiquitinated, leading to its subsequent degradation.

It is found in the nucleus. Probable transcriptional regulator that acts as a repressor of the gibberellin (GA) signaling pathway. Probably acts by participating in large multiprotein complexes that represses transcription of GA-inducible genes. Upon GA application, it is degraded by the proteasome, allowing the GA signaling pathway. The protein is DELLA protein GAIP-B (GAIPB) of Cucurbita maxima (Pumpkin).